The chain runs to 307 residues: Coproporphyrin III ferrochelatase (307 aa).

Residues Y12, R29, 45–46 (RY), S53, and Y124 contribute to the Fe-coproporphyrin III site. The Fe(2+) site is built by H181 and E263.

This sequence belongs to the ferrochelatase family.

It is found in the cytoplasm. The catalysed reaction is Fe-coproporphyrin III + 2 H(+) = coproporphyrin III + Fe(2+). The protein operates within porphyrin-containing compound metabolism; protoheme biosynthesis. Involved in coproporphyrin-dependent heme b biosynthesis. Catalyzes the insertion of ferrous iron into coproporphyrin III to form Fe-coproporphyrin III. This is Coproporphyrin III ferrochelatase from Staphylococcus epidermidis (strain ATCC 12228 / FDA PCI 1200).